Reading from the N-terminus, the 306-residue chain is Pantothenate kinase (306 aa).

Residue 91 to 98 participates in ATP binding; it reads GSVAVGKS.

The protein belongs to the prokaryotic pantothenate kinase family.

It is found in the cytoplasm. It carries out the reaction (R)-pantothenate + ATP = (R)-4'-phosphopantothenate + ADP + H(+). It participates in cofactor biosynthesis; coenzyme A biosynthesis; CoA from (R)-pantothenate: step 1/5. The chain is Pantothenate kinase from Streptococcus thermophilus (strain CNRZ 1066).